The sequence spans 72 residues: Probable transcription factor elt-4 (72 aa).

The segment at 16–40 (CSNCNGTNTTLWRRKAEGDPVCNAC) adopts a GATA-type zinc-finger fold.

It is found in the nucleus. In terms of biological role, probable transcription factor. Plays a role in regulating heme-dependent expression of heme transporter hrg-1. Modulates lifespan in a daf-16-dependent manner. In Caenorhabditis elegans, this protein is Probable transcription factor elt-4.